A 447-amino-acid chain; its full sequence is Phosphoglucosamine mutase (447 aa).

Ser-105 acts as the Phosphoserine intermediate in catalysis. Ser-105, Asp-244, Asp-246, and Asp-248 together coordinate Mg(2+). Ser-105 is subject to Phosphoserine.

This sequence belongs to the phosphohexose mutase family. It depends on Mg(2+) as a cofactor. In terms of processing, activated by phosphorylation.

It carries out the reaction alpha-D-glucosamine 1-phosphate = D-glucosamine 6-phosphate. Its function is as follows. Catalyzes the conversion of glucosamine-6-phosphate to glucosamine-1-phosphate. The chain is Phosphoglucosamine mutase from Polynucleobacter asymbioticus (strain DSM 18221 / CIP 109841 / QLW-P1DMWA-1) (Polynucleobacter necessarius subsp. asymbioticus).